The chain runs to 82 residues: Large ribosomal subunit protein bL27c (82 aa).

A disordered region spans residues Met-1 to Gly-22.

It belongs to the bacterial ribosomal protein bL27 family.

Its subcellular location is the plastid. The protein resides in the chloroplast. The protein is Large ribosomal subunit protein bL27c (rpl27) of Chrysotila carterae (Marine alga).